The chain runs to 546 residues: MIFLLFVVFPFVYAQLLPELLAGFQNGRFRGGPDGFNRGPGGFHRGPDGFGGDPRGGVDLGHLIGNIAANVGQEMGLNDADVIGDLRGISRGPRPSSMEWGRRARHFCRRYPGHPKCQRGQLPQFTDVPTIINTIIYNAGDLLPRVPTLNIHDPLAGLNSELVGFIKSLQSQFGQLSSQQRNEIHDSCRSFKCDQQSPQNTQAKQELLTKMLAFDQAVGGKAAPAHDKVNLRFDRTQQVKQALLKRANLSHIIVPADNGVFDRDVLLTEHQANFLLNELGEAGRGADVGAGGGGGGRVPRSGVFFQESAVQKWDIWKPIQYTLDDSLEESDKKDIRDALHEISINTCILFRYNATPKGYHLNYMKVDSTTFCGLSYVGRTDPANPIYLSFQCGDNRGVAMHETMHALGVSHQHLRLDRDKYIKIDWSNIDPQHYDTFAISDAKLYTSYGTKYAYDSIMHYNAYLGAKDPNKPTMIPLVNPQENTPKLGQRAKLTRGDIRLLKKMYCRPGCDDQNVHCGTWALHGYCKMKEQMKWMNENCKASCDKC.

The first 14 residues, 1-14 (MIFLLFVVFPFVYA), serve as a signal peptide directing secretion. Residues 15-300 (QLLPELLAGF…GGGGGGRVPR (286 aa)) constitute a propeptide that is removed on maturation. A glycan (N-linked (GlcNAc...) asparagine) is linked at asparagine 248. Positions 308–507 (SAVQKWDIWK…IRLLKKMYCR (200 aa)) constitute a Peptidase M12A domain. Disulfide bonds link cysteine 347-cysteine 506, cysteine 372-cysteine 392, cysteine 510-cysteine 546, cysteine 517-cysteine 539, and cysteine 526-cysteine 543. Zn(2+) is bound at residue histidine 401. Glutamate 402 is an active-site residue. Residues histidine 405 and histidine 411 each contribute to the Zn(2+) site. The 37-residue stretch at 510–546 (CDDQNVHCGTWALHGYCKMKEQMKWMNENCKASCDKC) folds into the ShKT domain.

Zn(2+) is required as a cofactor. In terms of tissue distribution, expressed in hypodermis, uterus and spermatheca.

It localises to the secreted. Its function is as follows. Metalloprotease. This is Zinc metalloproteinase nas-9 (nas-9) from Caenorhabditis elegans.